Here is a 470-residue protein sequence, read N- to C-terminus: MISRIPRLLFENILVPVADVLTKSVSNFAGHKSDQSYNSNATRVSTISDEEIEFYLNLKSAVLLLCLALCIAGFSVLMYFLYVLVFVPYNRVKRLGSIGYQNHEEGHLSKKDIANLVRRRRKVGDDLPPVFPNGWFRLVDSQQLEPGQVKQVTALGEHFAVFRSKSGKASILDAYCPHMGGNLAVGGIVKNDCLECPFHGWRFDGDGKCVAIPYSEKIPTFAKTKSWPCREVNKAIFVWFHCDGKEPEWEIPDISEISTGKFTYKGRVEHHANTHIQDVPENGSDLAHLSHLHVPHAMSGANLSTQYSSWWNFAEHIFKAQCIGPADGEPHISLFYLTHYLHVFKRFKLLSLNLNVYQIGPGIVHLHFDSPFGKGVFVQTLTPVEPLHLVLTHNLHASWSIPVWLGRIFLYLEAIQVDRDVMIWNNKTFEPRPKLLKEDSLIAKYRRWYSQFYTENSPRLTLKSEDGNGW.

The helical transmembrane segment at 67–87 (LALCIAGFSVLMYFLYVLVFV) threads the bilayer. The Rieske domain occupies 136 to 238 (FRLVDSQQLE…CREVNKAIFV (103 aa)). Residues Cys176, His178, Cys196, and His199 each contribute to the [2Fe-2S] cluster site.

The protein belongs to the cholesterol 7-desaturase family. [2Fe-2S] cluster is required as a cofactor.

It localises to the membrane. The catalysed reaction is cholesterol + NADPH + O2 + H(+) = 7-dehydrocholesterol + NADP(+) + 2 H2O. It catalyses the reaction cholesterol + NADH + O2 + H(+) = 7-dehydrocholesterol + NAD(+) + 2 H2O. It participates in steroid hormone biosynthesis; dafachronic acid biosynthesis. Catalyzes the production of 7-dehydrocholesterol (7-DHC or cholesta-5,7-dien-3beta-ol) by inserting a double bond (desaturating) at the C7-C8 single bond of cholesterol. Essential regulator of steroid biosynthesis as this reaction is the first step in the synthesis of the steroid hormone Delta(7)-dafachronic acid. This is Cholesterol 7-desaturase nvd 1 from Ciona intestinalis (Transparent sea squirt).